The following is a 459-amino-acid chain: Methylenetetrahydrofolate--tRNA-(uracil-5-)-methyltransferase TrmFO (459 aa).

11–16 provides a ligand contact to FAD; that stretch reads GAGLAG.

It belongs to the MnmG family. TrmFO subfamily. Requires FAD as cofactor.

The protein resides in the cytoplasm. The catalysed reaction is uridine(54) in tRNA + (6R)-5,10-methylene-5,6,7,8-tetrahydrofolate + NADH + H(+) = 5-methyluridine(54) in tRNA + (6S)-5,6,7,8-tetrahydrofolate + NAD(+). It catalyses the reaction uridine(54) in tRNA + (6R)-5,10-methylene-5,6,7,8-tetrahydrofolate + NADPH + H(+) = 5-methyluridine(54) in tRNA + (6S)-5,6,7,8-tetrahydrofolate + NADP(+). Catalyzes the folate-dependent formation of 5-methyl-uridine at position 54 (M-5-U54) in all tRNAs. The sequence is that of Methylenetetrahydrofolate--tRNA-(uracil-5-)-methyltransferase TrmFO from Synechococcus sp. (strain CC9311).